Reading from the N-terminus, the 156-residue chain is Small ribosomal subunit protein uS7 (156 aa).

This sequence belongs to the universal ribosomal protein uS7 family. Part of the 30S ribosomal subunit. Contacts proteins S9 and S11.

Its function is as follows. One of the primary rRNA binding proteins, it binds directly to 16S rRNA where it nucleates assembly of the head domain of the 30S subunit. Is located at the subunit interface close to the decoding center, probably blocks exit of the E-site tRNA. The protein is Small ribosomal subunit protein uS7 of Staphylococcus aureus (strain bovine RF122 / ET3-1).